The primary structure comprises 302 residues: DNA-directed RNA polymerase II subunit rpb3 (302 aa).

This sequence belongs to the archaeal Rpo3/eukaryotic RPB3 RNA polymerase subunit family. Component of the RNA polymerase II (Pol II) complex consisting of 12 subunits.

It is found in the nucleus. Its function is as follows. DNA-dependent RNA polymerase catalyzes the transcription of DNA into RNA using the four ribonucleoside triphosphates as substrates. Component of RNA polymerase II which synthesizes mRNA precursors and many functional non-coding RNAs. Pol II is the central component of the basal RNA polymerase II transcription machinery. It is composed of mobile elements that move relative to each other. Rpb3 is part of the core element with the central large cleft and the clamp element that moves to open and close the cleft. The sequence is that of DNA-directed RNA polymerase II subunit rpb3 (polr2c) from Dictyostelium discoideum (Social amoeba).